The primary structure comprises 869 residues: Bifunctional uridylyltransferase/uridylyl-removing enzyme (869 aa).

The uridylyltransferase stretch occupies residues 1-332 (MTDAPAERPD…QFDGEATPES (332 aa)). The uridylyl-removing stretch occupies residues 333 to 691 (LGGGFSLRRG…RRAVPDNDAL (359 aa)). An HD domain is found at 450–572 (VDQHTLMVLR…VGTRERLDYL (123 aa)). ACT domains follow at residues 692–774 (EVFV…RAVP) and 798–869 (RISL…LDPV).

This sequence belongs to the GlnD family. Mg(2+) is required as a cofactor.

The catalysed reaction is [protein-PII]-L-tyrosine + UTP = [protein-PII]-uridylyl-L-tyrosine + diphosphate. It catalyses the reaction [protein-PII]-uridylyl-L-tyrosine + H2O = [protein-PII]-L-tyrosine + UMP + H(+). With respect to regulation, uridylyltransferase (UTase) activity is inhibited by glutamine, while glutamine activates uridylyl-removing (UR) activity. Modifies, by uridylylation and deuridylylation, the PII regulatory proteins (GlnB and homologs), in response to the nitrogen status of the cell that GlnD senses through the glutamine level. Under low glutamine levels, catalyzes the conversion of the PII proteins and UTP to PII-UMP and PPi, while under higher glutamine levels, GlnD hydrolyzes PII-UMP to PII and UMP (deuridylylation). Thus, controls uridylylation state and activity of the PII proteins, and plays an important role in the regulation of nitrogen assimilation and metabolism. The polypeptide is Bifunctional uridylyltransferase/uridylyl-removing enzyme (Xanthomonas oryzae pv. oryzae (strain MAFF 311018)).